A 93-amino-acid chain; its full sequence is Cell division topological specificity factor (93 aa).

The protein belongs to the MinE family.

Its function is as follows. Prevents the cell division inhibition by proteins MinC and MinD at internal division sites while permitting inhibition at polar sites. This ensures cell division at the proper site by restricting the formation of a division septum at the midpoint of the long axis of the cell. This chain is Cell division topological specificity factor, found in Agathobacter rectalis (strain ATCC 33656 / DSM 3377 / JCM 17463 / KCTC 5835 / VPI 0990) (Eubacterium rectale).